Reading from the N-terminus, the 202-residue chain is Solute carrier family 66 member 3 (202 aa).

Positions 1–19 (MEAALLGLCNWSTLGVCAA) are cleaved as a signal peptide. The next 4 membrane-spanning stretches (helical) occupy residues 33–53 (SARG…LVFL), 64–84 (LTYL…LCIF), 97–117 (IAVL…IDLA), and 171–191 (FTIL…TVTV).

Its subcellular location is the membrane. This Homo sapiens (Human) protein is Solute carrier family 66 member 3.